The sequence spans 261 residues: Small ribosomal subunit protein eS4B (261 aa).

A Phosphoserine modification is found at Ser-32. One can recognise an S4 RNA-binding domain in the interval 42-105 (LPLIVFLRNR…NENFRLVYDV (64 aa)). Lys-62 participates in a covalent cross-link: Glycyl lysine isopeptide (Lys-Gly) (interchain with G-Cter in ubiquitin). Thr-115 carries the post-translational modification Phosphothreonine. Glycyl lysine isopeptide (Lys-Gly) (interchain with G-Cter in ubiquitin) cross-links involve residues Lys-134, Lys-161, Lys-168, Lys-174, Lys-179, Lys-211, and Lys-233. The residue at position 247 (Ser-247) is a Phosphoserine.

The protein belongs to the eukaryotic ribosomal protein eS4 family. As to quaternary structure, component of the small ribosomal subunit (SSU). Mature yeast ribosomes consist of a small (40S) and a large (60S) subunit. The 40S small subunit contains 1 molecule of ribosomal RNA (18S rRNA) and 33 different proteins (encoded by 57 genes). The large 60S subunit contains 3 rRNA molecules (25S, 5.8S and 5S rRNA) and 46 different proteins (encoded by 81 genes).

The protein localises to the cytoplasm. In terms of biological role, component of the ribosome, a large ribonucleoprotein complex responsible for the synthesis of proteins in the cell. The small ribosomal subunit (SSU) binds messenger RNAs (mRNAs) and translates the encoded message by selecting cognate aminoacyl-transfer RNA (tRNA) molecules. The large subunit (LSU) contains the ribosomal catalytic site termed the peptidyl transferase center (PTC), which catalyzes the formation of peptide bonds, thereby polymerizing the amino acids delivered by tRNAs into a polypeptide chain. The nascent polypeptides leave the ribosome through a tunnel in the LSU and interact with protein factors that function in enzymatic processing, targeting, and the membrane insertion of nascent chains at the exit of the ribosomal tunnel. This chain is Small ribosomal subunit protein eS4B, found in Saccharomyces cerevisiae (strain ATCC 204508 / S288c) (Baker's yeast).